Consider the following 64-residue polypeptide: Large ribosomal subunit protein bL35 (64 aa).

A disordered region spans residues Ile-22–Leu-44.

The protein belongs to the bacterial ribosomal protein bL35 family.

In Clavibacter sepedonicus (Clavibacter michiganensis subsp. sepedonicus), this protein is Large ribosomal subunit protein bL35.